The primary structure comprises 71 residues: Translation initiation factor IF-1 (71 aa).

One can recognise an S1-like domain in the interval 1–71 (MKEKNIEMQG…SKGRIIFRSR (71 aa)).

Belongs to the IF-1 family. Component of the 30S ribosomal translation pre-initiation complex which assembles on the 30S ribosome in the order IF-2 and IF-3, IF-1 and N-formylmethionyl-tRNA(fMet); mRNA recruitment can occur at any time during PIC assembly.

Its subcellular location is the cytoplasm. One of the essential components for the initiation of protein synthesis. Stabilizes the binding of IF-2 and IF-3 on the 30S subunit to which N-formylmethionyl-tRNA(fMet) subsequently binds. Helps modulate mRNA selection, yielding the 30S pre-initiation complex (PIC). Upon addition of the 50S ribosomal subunit IF-1, IF-2 and IF-3 are released leaving the mature 70S translation initiation complex. This Buchnera aphidicola subsp. Cinara cedri (strain Cc) protein is Translation initiation factor IF-1.